The primary structure comprises 230 residues: Complex I assembly factor TMEM126B, mitochondrial (230 aa).

The residue at position 34 (Ser34) is a Phosphoserine. A run of 4 helical transmembrane segments spans residues 72-92 (IYQM…SNFL), 110-130 (LATL…IDAL), 141-161 (VFRS…SLAF), and 199-219 (IPLV…YAVF).

Belongs to the TMEM126 family. As to quaternary structure, part of the mitochondrial complex I assembly/MCIA complex that comprises at least the core subunits TMEM126B, NDUFAF1, ECSIT and ACAD9 and complement subunits such as COA1 and TMEM186. Associates with the intermediate 370 kDa subcomplex of incompletely assembled complex I. Interacts with TMEM70.

The protein localises to the mitochondrion membrane. As part of the MCIA complex, involved in the assembly of the mitochondrial complex I. Participates in constructing the membrane arm of complex I. The chain is Complex I assembly factor TMEM126B, mitochondrial from Homo sapiens (Human).